The primary structure comprises 247 residues: tRNA (guanine-N(1)-)-methyltransferase (247 aa).

Residues Gly-112 and 132-137 contribute to the S-adenosyl-L-methionine site; that span reads IGDFVL.

This sequence belongs to the RNA methyltransferase TrmD family. As to quaternary structure, homodimer.

Its subcellular location is the cytoplasm. The enzyme catalyses guanosine(37) in tRNA + S-adenosyl-L-methionine = N(1)-methylguanosine(37) in tRNA + S-adenosyl-L-homocysteine + H(+). In terms of biological role, specifically methylates guanosine-37 in various tRNAs. The protein is tRNA (guanine-N(1)-)-methyltransferase of Geotalea uraniireducens (strain Rf4) (Geobacter uraniireducens).